Consider the following 165-residue polypeptide: Lipoprotein signal peptidase (165 aa).

Helical transmembrane passes span 64–84 (LGRW…GAWM) and 88–108 (GSRL…GNAV). Catalysis depends on residues Asp118 and Asp136. Residues 128–148 (SWYVFNVADAGIVAGVAGLLV) traverse the membrane as a helical segment.

It belongs to the peptidase A8 family.

The protein resides in the cell inner membrane. The enzyme catalyses Release of signal peptides from bacterial membrane prolipoproteins. Hydrolyzes -Xaa-Yaa-Zaa-|-(S,diacylglyceryl)Cys-, in which Xaa is hydrophobic (preferably Leu), and Yaa (Ala or Ser) and Zaa (Gly or Ala) have small, neutral side chains.. The protein operates within protein modification; lipoprotein biosynthesis (signal peptide cleavage). Functionally, this protein specifically catalyzes the removal of signal peptides from prolipoproteins. The sequence is that of Lipoprotein signal peptidase from Methylobacterium sp. (strain 4-46).